The chain runs to 610 residues: MSERFDAVAFLKTVTNQPGVYRMYDAGAEVIYVGKAKDLKKRLSSYFRCQLASRKTEALVRQIAQIDVTVTHTETEALLLEHNYIKRYQPRYNVLLRDDKSYPLIFLSADRHPRLAVHRGARRARGDYFGPFPNANAVRETLALLQKLFPIRQCEDSVYRNRSRPCLQYQIQRCLGPCVTGLVNDGEYARQVEYVRLFLSGKDSQVIDALVARMEEASRALRFEEAARLRDQIQAVRRVTERQFISGDHEDIDVIGVAFEAGMACIHVLFIRHGQVLGSRSYFPRVPAGTTLAEVLQTFVGQFYLQGSQIRTLPGEILIDFLLPDRKLLADSISELAGRRIPIQSQPRGDRARYLKLARTNAVTALNSKLSQQSTILQRLVQLEQVLQRADIQRMECFDISHTMGEETVASCVVFDRNGPLRSEYRRYNIKGITPGDDYAAMDQVLRRRYDKALNEEKIPDIIFIDGGKGQLGQAKQVFAELEVPWDTHRPLLLGIAKGSDRKAGLETLFFEAQGEGFSLPPDSPALHLIQHIRDESHNHAIAGHRKRRAKVRSTSALESIEGIGPKRRQLLLKYMGGMQPLRDASIDEIAKVPGISAALAEKIHYALKQ.

The GIY-YIG domain occupies 16–94 (NQPGVYRMYD…IKRYQPRYNV (79 aa)). A UVR domain is found at 204–239 (SQVIDALVARMEEASRALRFEEAARLRDQIQAVRRV).

The protein belongs to the UvrC family. In terms of assembly, interacts with UvrB in an incision complex.

Its subcellular location is the cytoplasm. Its function is as follows. The UvrABC repair system catalyzes the recognition and processing of DNA lesions. UvrC both incises the 5' and 3' sides of the lesion. The N-terminal half is responsible for the 3' incision and the C-terminal half is responsible for the 5' incision. This Edwardsiella ictaluri (strain 93-146) protein is UvrABC system protein C.